Consider the following 123-residue polypeptide: MDHKKTSIRTTALAALVLGAVAAPAFSAPVDQATYNGFKIYKQQRCETCHGATGEGSAAFPNLLNSLKNLSKDQFKEVVLKGRNAMPPFEANKKVAEGIDDLYTYIKGRSDGTVPAGELEKPQ.

An N-terminal signal peptide occupies residues 1 to 27 (MDHKKTSIRTTALAALVLGAVAAPAFS). The heme c site is built by Cys46, Cys49, His50, and Met86.

Post-translationally, binds 1 heme c group covalently per subunit.

This chain is Cytochrome c-555, found in Methylococcus capsulatus (strain ATCC 33009 / NCIMB 11132 / Bath).